Here is a 321-residue protein sequence, read N- to C-terminus: Glycerol-3-phosphate dehydrogenase [NAD(P)+] (321 aa).

4 residues coordinate NADPH: serine 14, phenylalanine 15, arginine 35, and lysine 109. Positions 109 and 137 each coordinate sn-glycerol 3-phosphate. Position 141 (alanine 141) interacts with NADPH. The sn-glycerol 3-phosphate site is built by lysine 192, aspartate 252, serine 262, arginine 263, and asparagine 264. The Proton acceptor role is filled by lysine 192. Arginine 263 is an NADPH binding site. NADPH is bound by residues leucine 287 and glutamate 289.

This sequence belongs to the NAD-dependent glycerol-3-phosphate dehydrogenase family.

It localises to the cytoplasm. The enzyme catalyses sn-glycerol 3-phosphate + NAD(+) = dihydroxyacetone phosphate + NADH + H(+). The catalysed reaction is sn-glycerol 3-phosphate + NADP(+) = dihydroxyacetone phosphate + NADPH + H(+). Its pathway is membrane lipid metabolism; glycerophospholipid metabolism. Catalyzes the reduction of the glycolytic intermediate dihydroxyacetone phosphate (DHAP) to sn-glycerol 3-phosphate (G3P), the key precursor for phospholipid synthesis. In Rickettsia felis (strain ATCC VR-1525 / URRWXCal2) (Rickettsia azadi), this protein is Glycerol-3-phosphate dehydrogenase [NAD(P)+].